The primary structure comprises 396 residues: 3-amino-4-hydroxybenzoic acid synthase (396 aa).

Residues 1-29 (MSSSPSPSPSSSSSSSASSSASSSPSSSS) form a disordered region.

Belongs to the archaeal-type DHQ synthase family. GriH subfamily. In terms of assembly, monomer. It depends on Mn(2+) as a cofactor.

The enzyme catalyses 2-amino-4,5-dihydroxy-6-oxo-7-(phosphooxy)heptanoate = 3-amino-4-hydroxybenzoate + phosphate + 2 H2O + H(+). In terms of biological role, catalyzes the cyclization of 2-amino-4,5-dihydroxy-6-one-heptanoic acid-7-phosphate to yield 3-amino-4-hydroxybenzoic acid (3,4-AHBA). This is 3-amino-4-hydroxybenzoic acid synthase (griH) from Streptomyces griseus subsp. griseus (strain JCM 4626 / CBS 651.72 / NBRC 13350 / KCC S-0626 / ISP 5235).